The sequence spans 76 residues: DNA-directed RNA polymerase subunit omega (76 aa).

The protein belongs to the RNA polymerase subunit omega family. In cyanobacteria the RNAP catalytic core is composed of 2 alpha, 1 beta, 1 beta', 1 gamma and 1 omega subunit. When a sigma factor is associated with the core the holoenzyme is formed, which can initiate transcription.

It carries out the reaction RNA(n) + a ribonucleoside 5'-triphosphate = RNA(n+1) + diphosphate. Functionally, promotes RNA polymerase assembly. Latches the N- and C-terminal regions of the beta' subunit thereby facilitating its interaction with the beta and alpha subunits. This Synechococcus elongatus (strain ATCC 33912 / PCC 7942 / FACHB-805) (Anacystis nidulans R2) protein is DNA-directed RNA polymerase subunit omega.